The sequence spans 234 residues: uncharacterized protein (234 aa).

Disordered regions lie at residues 1–65 (MTSV…RRGP) and 182–234 (ARGA…GRKT).

This is an uncharacterized protein from Homo sapiens (Human).